The primary structure comprises 506 residues: Glycerol kinase (506 aa).

T11 provides a ligand contact to ADP. ATP-binding residues include T11, S12, and S13. T11 is a sn-glycerol 3-phosphate binding site. ADP is bound at residue R15. The sn-glycerol 3-phosphate site is built by R81, E82, Y133, and D242. 5 residues coordinate glycerol: R81, E82, Y133, D242, and Q243. ADP-binding residues include T264 and G316. Residues T264, G316, Q320, and G421 each coordinate ATP. G421 and N425 together coordinate ADP.

The protein belongs to the FGGY kinase family.

It carries out the reaction glycerol + ATP = sn-glycerol 3-phosphate + ADP + H(+). It participates in polyol metabolism; glycerol degradation via glycerol kinase pathway; sn-glycerol 3-phosphate from glycerol: step 1/1. Its activity is regulated as follows. Inhibited by fructose 1,6-bisphosphate (FBP). Key enzyme in the regulation of glycerol uptake and metabolism. Catalyzes the phosphorylation of glycerol to yield sn-glycerol 3-phosphate. This Paracidovorax citrulli (strain AAC00-1) (Acidovorax citrulli) protein is Glycerol kinase.